The following is a 64-amino-acid chain: Large ribosomal subunit protein uL30 (64 aa).

It belongs to the universal ribosomal protein uL30 family. Part of the 50S ribosomal subunit.

The chain is Large ribosomal subunit protein uL30 from Syntrophus aciditrophicus (strain SB).